The chain runs to 385 residues: Odorant receptor 47a (385 aa).

Residues 1–33 (MDSFLQVQKSTIALLGFDLFSENREMWKRPYRA) are Cytoplasmic-facing. The chain crosses the membrane as a helical span at residues 34 to 54 (MNVFSIAAIFPFILAAVLHNW). At 55-62 (KNVLLLAD) the chain is on the extracellular side. A helical membrane pass occupies residues 63–83 (AMVALLITILGLFKFSMILYL). Residues 84-129 (RRDFKRLIDKFRLLMSNEAEQGEEYAEILNAANKQDQRMCTLFRTC) are Cytoplasmic-facing. Residues 130–150 (FLLAWALNSVLPLVRMGLSYW) form a helical membrane-spanning segment. Residues 151-175 (LAGHAEPELPFPCLFPWNIHIIRNY) lie on the Extracellular side of the membrane. The chain crosses the membrane as a helical span at residues 176–196 (VLSFIWSAFASTGVVLPAVSL). Residues 197–255 (DTIFCSFTSNLCAFFKIAQYKVVRFKGGSLKESQATLNKVFALYQTSLDMCNDLNQCYQ) are Cytoplasmic-facing. The chain crosses the membrane as a helical span at residues 256-276 (PIICAQFFISSLQLCMLGYLF). Residues 277-284 (SITFAQTE) are Extracellular-facing. The chain crosses the membrane as a helical span at residues 285–305 (GVYYASFIATIIIQAYIYCYC). The Cytoplasmic segment spans residues 306–357 (GENLKTESASFEWAIYDSPWHESLGAGGASTSICRSLLISMMRAHRGFRITG). The chain crosses the membrane as a helical span at residues 358 to 378 (YFFEANMEAFSSIVRTAMSYI). The Extracellular segment spans residues 379-385 (TMLRSFS).

The protein belongs to the insect chemoreceptor superfamily. Heteromeric odorant receptor channel (TC 1.A.69) family. Or1a subfamily. Interacts with Orco. Complexes exist early in the endomembrane system in olfactory sensory neurons (OSNs), coupling these complexes to the conserved ciliary trafficking pathway. In terms of tissue distribution, expressed with Orco in 40 olfactory receptor neurons in a broad area across the antenna, including both anterior and posterior faces. This expression pattern matches the distribution of the small sensilla basiconica. Expression in the antenna is observed late in antennal development at 93 hours APF.

The protein localises to the cell membrane. Its function is as follows. Odorant receptor which mediates acceptance or avoidance behavior, depending on its substrates. The odorant receptor repertoire encodes a large collection of odor stimuli that vary widely in identity, intensity, and duration. Complexes with Orco to form odorant-sensing units, providing sensitive and prolonged odorant signaling and calcium permeability. They are necessary and sufficient to promote functional reconstitution of odor-evoked signaling in sensory neurons that normally respond only to carbon dioxide. Involved in the behavioral responses to esters. Involved in the behavioral responses to pentyl acetate. The sequence is that of Odorant receptor 47a (Or47a) from Drosophila melanogaster (Fruit fly).